Reading from the N-terminus, the 353-residue chain is Photosystem II D2 protein (353 aa).

At T2 the chain carries N-acetylthreonine. Phosphothreonine is present on T2. The chain crosses the membrane as a helical span at residues 41-61 (CAYFALGGWFTGTTFVTSWYT). Residue H118 coordinates chlorophyll a. The chain crosses the membrane as a helical span at residues 125 to 141 (GFMLRQFELARSVQLRP). Pheophytin a is bound by residues Q130 and N143. A helical transmembrane segment spans residues 153–166 (VFVSVFLIYPLGQS). H198 contacts chlorophyll a. A helical transmembrane segment spans residues 208–228 (AALLCAIHGATVENTLFEDGD). Positions 215 and 262 each coordinate a plastoquinone. Fe cation is bound at residue H215. H269 serves as a coordination point for Fe cation. Residues 279–295 (GLWMSALGVVGLALNLR) form a helical membrane-spanning segment.

This sequence belongs to the reaction center PufL/M/PsbA/D family. PSII is composed of 1 copy each of membrane proteins PsbA, PsbB, PsbC, PsbD, PsbE, PsbF, PsbH, PsbI, PsbJ, PsbK, PsbL, PsbM, PsbT, PsbX, PsbY, PsbZ, Psb30/Ycf12, at least 3 peripheral proteins of the oxygen-evolving complex and a large number of cofactors. It forms dimeric complexes. The D1/D2 heterodimer binds P680, chlorophylls that are the primary electron donor of PSII, and subsequent electron acceptors. It shares a non-heme iron and each subunit binds pheophytin, quinone, additional chlorophylls, carotenoids and lipids. There is also a Cl(-1) ion associated with D1 and D2, which is required for oxygen evolution. The PSII complex binds additional chlorophylls, carotenoids and specific lipids. serves as cofactor.

The protein localises to the plastid. Its subcellular location is the chloroplast thylakoid membrane. The catalysed reaction is 2 a plastoquinone + 4 hnu + 2 H2O = 2 a plastoquinol + O2. Photosystem II (PSII) is a light-driven water:plastoquinone oxidoreductase that uses light energy to abstract electrons from H(2)O, generating O(2) and a proton gradient subsequently used for ATP formation. It consists of a core antenna complex that captures photons, and an electron transfer chain that converts photonic excitation into a charge separation. The D1/D2 (PsbA/PsbD) reaction center heterodimer binds P680, the primary electron donor of PSII as well as several subsequent electron acceptors. D2 is needed for assembly of a stable PSII complex. This chain is Photosystem II D2 protein, found in Olimarabidopsis pumila (Dwarf rocket).